The following is a 130-amino-acid chain: Small ribosomal subunit protein bS6 (130 aa).

The tract at residues 100–130 (SPMVKAKDERRERREDFAEAGDDVEAGDSEE) is disordered. The segment covering 104–116 (KAKDERRERREDF) has biased composition (basic and acidic residues). Over residues 117–130 (AEAGDDVEAGDSEE) the composition is skewed to acidic residues.

It belongs to the bacterial ribosomal protein bS6 family.

Binds together with bS18 to 16S ribosomal RNA. The sequence is that of Small ribosomal subunit protein bS6 from Pectobacterium atrosepticum (strain SCRI 1043 / ATCC BAA-672) (Erwinia carotovora subsp. atroseptica).